The chain runs to 336 residues: Tetraacyldisaccharide 4'-kinase (336 aa).

ATP is bound at residue 60–67 (TVGGTGKT).

It belongs to the LpxK family.

The enzyme catalyses a lipid A disaccharide + ATP = a lipid IVA + ADP + H(+). It participates in glycolipid biosynthesis; lipid IV(A) biosynthesis; lipid IV(A) from (3R)-3-hydroxytetradecanoyl-[acyl-carrier-protein] and UDP-N-acetyl-alpha-D-glucosamine: step 6/6. Transfers the gamma-phosphate of ATP to the 4'-position of a tetraacyldisaccharide 1-phosphate intermediate (termed DS-1-P) to form tetraacyldisaccharide 1,4'-bis-phosphate (lipid IVA). This Pseudomonas fluorescens (strain Pf0-1) protein is Tetraacyldisaccharide 4'-kinase.